A 66-amino-acid chain; its full sequence is Beta-toxin Cb3 (66 aa).

The LCN-type CS-alpha/beta domain maps to Lys1–Leu66. 4 disulfides stabilise this stretch: Cys12-Cys65, Cys16-Cys41, Cys25-Cys46, and Cys29-Cys48.

Belongs to the long (4 C-C) scorpion toxin superfamily. Sodium channel inhibitor family. Beta subfamily. In terms of tissue distribution, expressed by the venom gland.

It is found in the secreted. Its function is as follows. Beta toxins bind voltage-independently at site-4 of sodium channels (Nav) and reduces peak current and shifts the voltage of activation toward more negative potentials thereby affecting sodium channel activation and promoting spontaneous and repetitive firing. Has an inhibitory effect on voltage-gated sodium channels hNav1.1/SCN1A, hNav1.2/SCN2A, hNav1.4/SCN4A and hNav1.6/SCN8A. Reduces the peak current of hNav1.5/SCN5A but does not shift its voltage of activation. Also affects the inactivation processes of hNav1.1/SCN1A, hNav1.4/SCN4A, hNav1.5/SCN5A and hNav1.6/SCN8A. This toxin is active against mammals and lethal to mice. In Centruroides baergi (Scorpion), this protein is Beta-toxin Cb3.